A 242-amino-acid polypeptide reads, in one-letter code: MEIKLEEILKKQPLYSGKAKSIYEIDDDKVLIEFRDDITAGNGAKHDVKQGKGYLNALISSKLFEALEENGVKTHYIKYIEPRYMIAKKVEIIPIEVIVRNIAAGSLCRRYPFEEGKELPFPIVQFDYKNDEYGDPMLNEDIAVALGLATREELNKIKEIALKVNEVLKKLFDEKGIILVDFKIEIGKDREGNLLVADEISPDTMRLWDKETRDVLDKDVFRKDLGDVIAKYRIVAERLGLL.

Belongs to the SAICAR synthetase family.

It catalyses the reaction 5-amino-1-(5-phospho-D-ribosyl)imidazole-4-carboxylate + L-aspartate + ATP = (2S)-2-[5-amino-1-(5-phospho-beta-D-ribosyl)imidazole-4-carboxamido]succinate + ADP + phosphate + 2 H(+). It participates in purine metabolism; IMP biosynthesis via de novo pathway; 5-amino-1-(5-phospho-D-ribosyl)imidazole-4-carboxamide from 5-amino-1-(5-phospho-D-ribosyl)imidazole-4-carboxylate: step 1/2. The polypeptide is Phosphoribosylaminoimidazole-succinocarboxamide synthase (purC) (Methanocaldococcus jannaschii (strain ATCC 43067 / DSM 2661 / JAL-1 / JCM 10045 / NBRC 100440) (Methanococcus jannaschii)).